The chain runs to 114 residues: Small ribosomal subunit protein bS6 (114 aa).

The protein belongs to the bacterial ribosomal protein bS6 family.

Its function is as follows. Binds together with bS18 to 16S ribosomal RNA. In Hydrogenovibrio crunogenus (strain DSM 25203 / XCL-2) (Thiomicrospira crunogena), this protein is Small ribosomal subunit protein bS6.